A 547-amino-acid chain; its full sequence is Membrane transporter D1 (547 aa).

Residues 1–2 lie on the Cytoplasmic side of the membrane; it reads MR. A helical membrane pass occupies residues 3 to 25; the sequence is ASVMLCAALGGFLFGYDTGVINA. Residues 26-43 are Extracellular-facing; that stretch reads ALFQMKDHFGFSEHSWQY. The helical transmembrane segment at 44-64 threads the bilayer; the sequence is ALIVAIAIAGAFVGAFISGFI. The Cytoplasmic segment spans residues 65–78; that stretch reads SAAFGRRPCIAVAD. A helical membrane pass occupies residues 79 to 99; the sequence is ALFVIGSVLMGAAPNVEVVLV. At 100-101 the chain is on the extracellular side; it reads SR. Residues 102-122 traverse the membrane as a helical segment; it reads VIVGLAIGISSATIPVYLAEV. At 123-136 the chain is on the cytoplasmic side; sequence TSPKHRGATIVLNN. Residues 137–157 traverse the membrane as a helical segment; that stretch reads LFLTGGQFVAAGFTAIMVVFT. Residues 158-164 are Extracellular-facing; sequence SKNIGWR. Residues 165–185 traverse the membrane as a helical segment; it reads VAIGIGALPAVVQAFCLLFFL. The Cytoplasmic segment spans residues 186–245; the sequence is PESPRWLLSKGHADRAKAVADKFEVDLCEFQEGDELPSVRIDYRPLMARDMRFRVVLSSG. A helical membrane pass occupies residues 246–266; sequence LQIIQQFSGINTIMYYSSVIL. Topologically, residues 267–276 are extracellular; that stretch reads YDAGFRDAIM. Residues 277–297 form a helical membrane-spanning segment; that stretch reads PVVLSIPLAFMNALFTAVAIF. Over 298-308 the chain is Cytoplasmic; it reads TVDRFGRRRML. The helical transmembrane segment at 309-329 threads the bilayer; the sequence is LISVFGCLVLLVVIAIIGFFI. At 330-339 the chain is on the extracellular side; sequence GTRISYSVGG. A helical membrane pass occupies residues 340-360; the sequence is GLFLALLAVFLALYAPGIGCI. The Cytoplasmic portion of the chain corresponds to 361–385; the sequence is PWVIMGEIFPTHLRTSAASVATMAN. The chain crosses the membrane as a helical span at residues 386–406; the sequence is WGANVLVSQVFPILMGAIGVG. Residue Gly-407 is a topological domain, extracellular. A helical membrane pass occupies residues 408–428; sequence TFTIISGLMALGCIFVYFFAV. Topologically, residues 429–547 are cytoplasmic; that stretch reads ETKGLTLEQI…AIKAAPHEPK (119 aa). 2 disordered regions span residues 449 to 468 and 510 to 547; these read PPRFHEEGESGESGAGYRED and VSNKFEERATSSSSDPQSLENQDEVRQAAIKAAPHEPK. The segment covering 519-529 has biased composition (polar residues); the sequence is TSSSSDPQSLE.

This sequence belongs to the major facilitator superfamily. Sugar transporter (TC 2.A.1.1) family.

It localises to the membrane. In Leishmania donovani, this protein is Membrane transporter D1.